Here is a 360-residue protein sequence, read N- to C-terminus: Phospho-N-acetylmuramoyl-pentapeptide-transferase (360 aa).

Transmembrane regions (helical) follow at residues 26-46, 73-93, 94-114, 132-152, 168-188, 199-219, 239-259, 263-283, 288-308, and 338-358; these read AVLS…KMIL, TMGG…WGDL, SNPY…IGFV, WKYF…YMIG, IMPQ…VGTS, GLAI…AWAT, LVIF…FNTY, VFMG…IAVL, FLLV…ILQV, and VIIR…VTLK.

This sequence belongs to the glycosyltransferase 4 family. MraY subfamily. Mg(2+) serves as cofactor.

Its subcellular location is the cell inner membrane. The enzyme catalyses UDP-N-acetyl-alpha-D-muramoyl-L-alanyl-gamma-D-glutamyl-meso-2,6-diaminopimeloyl-D-alanyl-D-alanine + di-trans,octa-cis-undecaprenyl phosphate = di-trans,octa-cis-undecaprenyl diphospho-N-acetyl-alpha-D-muramoyl-L-alanyl-D-glutamyl-meso-2,6-diaminopimeloyl-D-alanyl-D-alanine + UMP. The protein operates within cell wall biogenesis; peptidoglycan biosynthesis. In terms of biological role, catalyzes the initial step of the lipid cycle reactions in the biosynthesis of the cell wall peptidoglycan: transfers peptidoglycan precursor phospho-MurNAc-pentapeptide from UDP-MurNAc-pentapeptide onto the lipid carrier undecaprenyl phosphate, yielding undecaprenyl-pyrophosphoryl-MurNAc-pentapeptide, known as lipid I. The sequence is that of Phospho-N-acetylmuramoyl-pentapeptide-transferase from Actinobacillus succinogenes (strain ATCC 55618 / DSM 22257 / CCUG 43843 / 130Z).